A 242-amino-acid polypeptide reads, in one-letter code: tRNA (guanine-N(1)-)-methyltransferase (242 aa).

Residues Gly115 and 134–139 (LGDFVL) contribute to the S-adenosyl-L-methionine site. Basic and acidic residues predominate over residues 210-224 (QEQREQRTAARRPDL). The disordered stretch occupies residues 210–242 (QEQREQRTAARRPDLMQRWQQRFGADNDSEHRA).

Belongs to the RNA methyltransferase TrmD family. As to quaternary structure, homodimer.

The protein resides in the cytoplasm. The catalysed reaction is guanosine(37) in tRNA + S-adenosyl-L-methionine = N(1)-methylguanosine(37) in tRNA + S-adenosyl-L-homocysteine + H(+). In terms of biological role, specifically methylates guanosine-37 in various tRNAs. The polypeptide is tRNA (guanine-N(1)-)-methyltransferase (Synechococcus sp. (strain WH7803)).